The primary structure comprises 253 residues: MLLTIDVGNTNTVLGVFDGDQLANSWRVRTDPRATADELGWLYRGLLGDHPIGGVSVCSTVPAALREIRRMVSRTFPAMPTVVVEPGTRTGVPILIDNPKEAGADRIMNTLAAHHLYGGPAIVVDFGTATNIDVVSARGEFLGGAFAPGIEVALDALASRAAQLRNVELTTPRSVIGKSTVEALQSGMIYGVVGQVDALVRRIRAELGTPATTIATGGLAPLVIKESETLDNHEPHLTLIGLRLVFEKNTEPR.

ATP is bound at residue Asp6–Val13. Gly103–Arg106 provides a ligand contact to substrate. The active-site Proton acceptor is Asp105. Asp125 serves as a coordination point for K(+). Residue Thr128 participates in ATP binding. Residue Thr180 coordinates substrate.

It belongs to the type III pantothenate kinase family. As to quaternary structure, homodimer. NH4(+) is required as a cofactor. Requires K(+) as cofactor.

The protein localises to the cytoplasm. The catalysed reaction is (R)-pantothenate + ATP = (R)-4'-phosphopantothenate + ADP + H(+). Its pathway is cofactor biosynthesis; coenzyme A biosynthesis; CoA from (R)-pantothenate: step 1/5. Functionally, catalyzes the phosphorylation of pantothenate (Pan), the first step in CoA biosynthesis. The protein is Type III pantothenate kinase of Parafrankia sp. (strain EAN1pec).